Here is a 526-residue protein sequence, read N- to C-terminus: Lycopene epsilon cyclase, chloroplastic (526 aa).

108–136 (LVVIGCGPAGLALAAESAKLGLNVGLVGP) contacts NAD(+). Helical transmembrane passes span 443–463 (FFLFGLALILQLDIEGIRSFF) and 477–497 (FLGSSLSSADLMLFAFYMFII).

It belongs to the lycopene cyclase family.

The protein localises to the plastid. It localises to the chloroplast membrane. The enzyme catalyses a carotenoid psi-end group = a carotenoid epsilon-end group. Its pathway is carotenoid biosynthesis; alpha-zeacarotene biosynthesis. It functions in the pathway carotenoid biosynthesis; delta-carotene biosynthesis. Catalyzes the single cyclization reaction which converts lycopene to delta-carotene and neurosporene to alpha-zeacarotene. Required for lutein biosynthesis. This is Lycopene epsilon cyclase, chloroplastic from Solanum lycopersicum (Tomato).